Consider the following 303-residue polypeptide: Quinolinate synthase (303 aa).

Residues histidine 24 and serine 41 each coordinate iminosuccinate. [4Fe-4S] cluster is bound at residue cysteine 86. Iminosuccinate-binding positions include 112-114 (YIN) and serine 129. Cysteine 172 serves as a coordination point for [4Fe-4S] cluster. Residues 198 to 200 (HPE) and threonine 215 contribute to the iminosuccinate site. Cysteine 260 contributes to the [4Fe-4S] cluster binding site.

This sequence belongs to the quinolinate synthase family. Type 2 subfamily. Requires [4Fe-4S] cluster as cofactor.

The protein resides in the cytoplasm. It carries out the reaction iminosuccinate + dihydroxyacetone phosphate = quinolinate + phosphate + 2 H2O + H(+). It participates in cofactor biosynthesis; NAD(+) biosynthesis; quinolinate from iminoaspartate: step 1/1. Functionally, catalyzes the condensation of iminoaspartate with dihydroxyacetone phosphate to form quinolinate. This is Quinolinate synthase from Caldicellulosiruptor bescii (strain ATCC BAA-1888 / DSM 6725 / KCTC 15123 / Z-1320) (Anaerocellum thermophilum).